Consider the following 305-residue polypeptide: U6 small nuclear RNA (adenine-(43)-N(6))-methyltransferase (305 aa).

Residues Arg-87, Gly-112, Glu-135, Thr-166, and Asn-188 each coordinate S-adenosyl-L-methionine. The interval 197-221 (PNPLGGNTRNPERRPAPNNARTGSQ) is disordered.

This sequence belongs to the methyltransferase superfamily. METTL16/RlmF family.

It catalyses the reaction adenosine in U6 snRNA + S-adenosyl-L-methionine = N(6)-methyladenosine in U6 snRNA + S-adenosyl-L-homocysteine + H(+). Functionally, RNA N6-methyltransferase that mediates N6-methylation of adenine of U6 small nuclear RNA (U6 snRNA). This Drosophila melanogaster (Fruit fly) protein is U6 small nuclear RNA (adenine-(43)-N(6))-methyltransferase.